Here is a 336-residue protein sequence, read N- to C-terminus: Fimbrial adhesin PapGII (336 aa).

Positions 1–20 are cleaved as a signal peptide; sequence MKKWFPALLFSLCVSGESSA. 2 disulfides stabilise this stretch: Cys64/Cys138 and Cys217/Cys249. Residues Glu79 and 124–127 each bind D-galactose; that span reads GYKW.

Belongs to the adhesin PapG family.

The protein resides in the secreted. Its subcellular location is the fimbrium. Its function is as follows. Tip adhesin component of type P pili that plays a critical role in kidney infection through targeted interaction with the globoseries glycolipids containing the Gal-alpha(1-4)-Gal disaccharide present on uroepithelial cells. In turn, transcriptionally regulates host gene expression in kidney cells, leading to inflammatory pathway activation and renal tissue damage. Acts thereby as key determinant of invasive uropathogenic E.coli (UPEC), which cause pyelonephritis and urinary-source bacteremia. This is Fimbrial adhesin PapGII from Escherichia coli O6:H1 (strain CFT073 / ATCC 700928 / UPEC).